Here is a 463-residue protein sequence, read N- to C-terminus: A-type ATP synthase subunit B (463 aa).

This sequence belongs to the ATPase alpha/beta chains family. Has multiple subunits with at least A(3), B(3), C, D, E, F, H, I and proteolipid K(x).

It localises to the cell membrane. Component of the A-type ATP synthase that produces ATP from ADP in the presence of a proton gradient across the membrane. The B chain is a regulatory subunit. The chain is A-type ATP synthase subunit B from Aeropyrum pernix (strain ATCC 700893 / DSM 11879 / JCM 9820 / NBRC 100138 / K1).